A 664-amino-acid chain; its full sequence is DNA ligase (664 aa).

NAD(+) is bound by residues 32–36 (DKEYD) and 80–81 (SL). Residue K122 is the N6-AMP-lysine intermediate of the active site. Positions 144, 178, and 314 each coordinate NAD(+). Positions 407, 410, 423, and 429 each coordinate Zn(2+). Positions 587-664 (IDENPFMDKT…NEEEFSNKIK (78 aa)) constitute a BRCT domain.

The protein belongs to the NAD-dependent DNA ligase family. LigA subfamily. The cofactor is Mg(2+). It depends on Mn(2+) as a cofactor.

It carries out the reaction NAD(+) + (deoxyribonucleotide)n-3'-hydroxyl + 5'-phospho-(deoxyribonucleotide)m = (deoxyribonucleotide)n+m + AMP + beta-nicotinamide D-nucleotide.. In terms of biological role, DNA ligase that catalyzes the formation of phosphodiester linkages between 5'-phosphoryl and 3'-hydroxyl groups in double-stranded DNA using NAD as a coenzyme and as the energy source for the reaction. It is essential for DNA replication and repair of damaged DNA. In Clostridium botulinum (strain Okra / Type B1), this protein is DNA ligase.